A 256-amino-acid chain; its full sequence is uncharacterized protein (256 aa).

A signal peptide spans 1–22; that stretch reads MKSIKRIGLCISLLILSIFVTS. Residue Cys23 is the site of N-palmitoyl cysteine attachment. A lipid anchor (S-diacylglycerol cysteine) is attached at Cys23.

It belongs to the staphylococcal tandem lipoprotein family.

Its subcellular location is the cell membrane. This is an uncharacterized protein from Staphylococcus aureus (strain USA300).